Consider the following 562-residue polypeptide: Arginine--tRNA ligase 2 (562 aa).

The 'HIGH' region signature appears at 122 to 132 (PNIAKPFSMGH).

This sequence belongs to the class-I aminoacyl-tRNA synthetase family. As to quaternary structure, monomer.

Its subcellular location is the cytoplasm. The enzyme catalyses tRNA(Arg) + L-arginine + ATP = L-arginyl-tRNA(Arg) + AMP + diphosphate. The chain is Arginine--tRNA ligase 2 (argS2) from Bacillus anthracis.